The chain runs to 582 residues: External alternative NAD(P)H-ubiquinone oxidoreductase B4, mitochondrial (582 aa).

The transit peptide at 1 to 39 (MSFHSFYQRASSLFKAYPSTSKILLLSTFSGGGGVLVYS) directs the protein to the mitochondrion. 65 to 95 (KVVVLGSGWSGYSFLSYLNNPNYDVQVVSPR) is a binding site for FAD. An NAD(+)-binding site is contributed by 227–263 (LHFVVVGGGPTGVEFSAELHDFLVQDVAKIYPKVQEF). One can recognise an EF-hand domain in the interval 384-419 (RVMEDIAAIFNKADKGNTGTLKKKDFNSVVKDICQR). 4 residues coordinate Ca(2+): Asp397, Thr401, Thr403, and Asp408. The short motif at 573–582 (FVFGRDSSSI) is the Microbody targeting signal element.

This sequence belongs to the NADH dehydrogenase family. The cofactor is FAD. In terms of tissue distribution, expressed in seedlings, roots, cotyledons, stems, buds and flowers and, to a lower extent, in stems and leaves.

The protein resides in the mitochondrion inner membrane. Its subcellular location is the peroxisome. It catalyses the reaction a quinone + NADH + H(+) = a quinol + NAD(+). It carries out the reaction a ubiquinone + NADH + H(+) = a ubiquinol + NAD(+). Its activity is regulated as follows. No effect of calcium ions on activity. In terms of biological role, alternative NADH-ubiquinone oxidoreductase which catalyzes the oxidation of mitochondrial NADH does not translocate protons across the inner mitochondrial membrane. NAD(P)H dehydrogenase; more efficient on NADH. The protein is External alternative NAD(P)H-ubiquinone oxidoreductase B4, mitochondrial (NDB4) of Arabidopsis thaliana (Mouse-ear cress).